Here is an 852-residue protein sequence, read N- to C-terminus: MGMCSRQERIQKDIDVVIQKSRAEKDCLFADFRYSDSTFTFTYVGGPKSVSYSVHVSEDYPDNTYVSSSENDEDVLVTTDPIPVIFHRIATELRKTNDINCCLSIRSKLQKENGEESRQNSTVEEDSEGDNDSEEFYYGGQVNYDGELHKHPQLEADLSAVRELYGPHAVSLREYGAIDDVDIDLHIDVSFLDEEIAVAWEVIRTEPIIVRLHCSLTQYLNGPVPTVDVFQISTKERFGLGHQLKKIMQTFVSQQWKQSKDKSNCPHGKKLSEKKVKSPLHLFSTLRRSPSYPPPGCGKSKSKLKPEQDGISKTHKLLRRTCSSTVKADDMCAKSHRTFGRSLSSDPRAEQAMSTIKSHKLLGRPCPSAGKQEDCLTLKSHKLLTRSCSGDPRCEHNTNLKPHKLLSRSYSSNLRMEELYGLKNHKLLSKSYSSAPKTSKMEHFKEPNAEGRRLSLTSGLIGILTPSSSSSQPPTNGAKSIPIRDRGFLVQTIEFAEQRIPVLNEYCVVCDEPHVFQNGPMLRPTVCERELCVFAFQTLGVMNEAADEIATGAQVVDLLVSMCRSALESPRKVVIFEPYPSVVDPNDPQMLAFNPRKKNYDRVMKALDSITSIREMTQAPYLEIKKQMDKQDPLAHPLLQWVISSNRSHIVKLPVNRQLKFMHTPHQFLLLSSPPAKESNFRAAKKLFGSTFAFHGSHIENWHSILRNGLVVASNTRLQLHGAMYGSGIYLSPMSSISFGYSGMNKKQKVSSKDEPASSSKSSNASQSQKKGQQSQFLQSRNLKCIALCEVITSPDLHKHGEIWVVPNTDHVCTRFFFVYEDGQVGDANINTQEGGIHKEILRVIGNQTATG.

Disordered regions lie at residues 113–134 (NGEE…NDSE) and 289–310 (SPSY…EQDG). Over residues 123 to 134 (VEEDSEGDNDSE) the composition is skewed to acidic residues. Cys332, Cys366, Cys375, and Cys394 each carry ADP-ribosylcysteine. The PARP catalytic domain maps to 615–842 (EMTQAPYLEI…QEGGIHKEIL (228 aa)). The segment at 748–775 (QKVSSKDEPASSSKSSNASQSQKKGQQS) is disordered. Residues 757–775 (ASSSKSSNASQSQKKGQQS) are compositionally biased toward low complexity.

The protein belongs to the ARTD/PARP family. In terms of processing, auto-mono-ADP-ribosylated.

It catalyses the reaction L-cysteinyl-[protein] + NAD(+) = S-(ADP-D-ribosyl)-L-cysteinyl-[protein] + nicotinamide + H(+). Mono-ADP-ribosyltransferase that mediates mono-ADP-ribosylation of target proteins. This chain is Protein mono-ADP-ribosyltransferase PARP8, found in Mus musculus (Mouse).